The chain runs to 116 residues: UPF0342 protein RBAM_010030 (116 aa).

The protein belongs to the UPF0342 family.

This is UPF0342 protein RBAM_010030 from Bacillus velezensis (strain DSM 23117 / BGSC 10A6 / LMG 26770 / FZB42) (Bacillus amyloliquefaciens subsp. plantarum).